Reading from the N-terminus, the 386-residue chain is Histone-lysine N-methyltransferase SETD7 (386 aa).

Residues 1-12 (MDSSDDEIACDE) show a composition bias toward acidic residues. Positions 1 to 21 (MDSSDDEIACDEGDYKGAKDD) are disordered. MORN repeat units follow at residues 15 to 38 (YKGA…SGDE), 39 to 61 (FIGA…DDST), 62 to 84 (LEGN…DGSI), and 109 to 131 (FRGQ…DGGS). The 123-residue stretch at 222 to 344 (ELVYAAPSKI…EGDELTVHYT (123 aa)) folds into the SET domain. S-adenosyl-L-methionine contacts are provided by residues 234–236 (AGE), N304, and H305.

The protein belongs to the class V-like SAM-binding methyltransferase superfamily. Histone-lysine methyltransferase family. SET7 subfamily.

The protein resides in the nucleus. It is found in the chromosome. It carries out the reaction L-lysyl(4)-[histone H3] + S-adenosyl-L-methionine = N(6)-methyl-L-lysyl(4)-[histone H3] + S-adenosyl-L-homocysteine + H(+). The catalysed reaction is L-lysyl-[protein] + S-adenosyl-L-methionine = N(6)-methyl-L-lysyl-[protein] + S-adenosyl-L-homocysteine + H(+). Histone methyltransferase that specifically monomethylates 'Lys-4' of histone H3. H3 'Lys-4' methylation represents a specific tag for epigenetic transcriptional activation. Plays a central role in the transcriptional activation of genes. Also has methyltransferase activity toward non-histone proteins. The protein is Histone-lysine N-methyltransferase SETD7 (setd7) of Halocynthia roretzi (Sea squirt).